The chain runs to 869 residues: MMEQYYELKAQAQDCLLFYRMGDFFELFFDDAKKASAILDIALTSRGTHIEESIPMCGVPIHAAESYLARLIKAGCRVAIADQVETPAEAKKRGGSKALVKRAIIRVVTAGTLTEEALLDSRAANWLVAVARAGSDFGLAAADISTGRFETIALSEGRLDSELARLSAAEVIAPESLVQQEAYKNRIPQAVELSNECFNSPHGEARLKSIFKISTLDGFGIFSRAELAAIDGLLAWLDRAGQGKLPFLQQPVRRAYADHMLIDAATRSSLELTASTEGRRDGSLVSSIDHTVTGAGARLLTADLGAPLMDIDVIHKRLDLVEFFFYDTLLREDVRDLLKGSPDLARVLGRLVAGRGTPRDLSLLRDGLNQAFILYEKLFSLEHKPALLEQILPDFRGHGSLVDLLERALIEQPPIDATQGGFIAKGYDHALDELRSMGGESRRAIAALEATYREKTGINTLKIRHNNVLGYHIEVPSRHADALMQANSGFTHRQTLAGVVRFNASELHEQAIRATQAGVQAIAIESKHLACLIESTLEKRDNIAACADALARLDVSAGFADCAVQKNWTRPTVDDSCCFDVIQGRHPVVENALVKSGERFVANNTNLDPKNRLWLVTGPNMGGKSTFLRQNALLAVLAQTGSFVPAEKARIGLVDRLFSRVGASDNLARGRSTFMVEMVETAAILSQATNRSFVILDEVGRGTSTYDGLAIAWAVVEAVHDINACRCLFATHYHELTQLTSRLPALSLHHVRAKEWQGDLVLLHEMAEGAADRSYGIEVARLAGLPPVVLKRASEVLAQLENSSGKNNDSSANLSDLPLFGVQAFQTVLPQNNPLYDAVSELDADALTPRQALDIIYRLKELAAKDKVM.

G618 to S625 lines the ATP pocket.

Belongs to the DNA mismatch repair MutS family.

Functionally, this protein is involved in the repair of mismatches in DNA. It is possible that it carries out the mismatch recognition step. This protein has a weak ATPase activity. This is DNA mismatch repair protein MutS from Zymomonas mobilis subsp. mobilis (strain ATCC 31821 / ZM4 / CP4).